We begin with the raw amino-acid sequence, 38 residues long: Photosystem II reaction center protein L (38 aa).

The chain crosses the membrane as a helical span at residues Ser17–Phe37.

This sequence belongs to the PsbL family. As to quaternary structure, PSII is composed of 1 copy each of membrane proteins PsbA, PsbB, PsbC, PsbD, PsbE, PsbF, PsbH, PsbI, PsbJ, PsbK, PsbL, PsbM, PsbT, PsbX, PsbY, PsbZ, Psb30/Ycf12, peripheral proteins PsbO, CyanoQ (PsbQ), PsbU, PsbV and a large number of cofactors. It forms dimeric complexes.

It localises to the cellular thylakoid membrane. One of the components of the core complex of photosystem II (PSII). PSII is a light-driven water:plastoquinone oxidoreductase that uses light energy to abstract electrons from H(2)O, generating O(2) and a proton gradient subsequently used for ATP formation. It consists of a core antenna complex that captures photons, and an electron transfer chain that converts photonic excitation into a charge separation. This subunit is found at the monomer-monomer interface and is required for correct PSII assembly and/or dimerization. The polypeptide is Photosystem II reaction center protein L (Acaryochloris marina (strain MBIC 11017)).